The primary structure comprises 181 residues: Cytochrome b6-f complex iron-sulfur subunit (181 aa).

Residues methionine 1–glutamate 35 form a disordered region. A run of 2 helical transmembrane segments spans residues valine 53–valine 73 and glycine 114–aspartate 134. Positions leucine 85 to valine 178 constitute a Rieske domain. Residues cysteine 124, histidine 126, cysteine 142, and histidine 145 each contribute to the [2Fe-2S] cluster site. Cysteine 129 and cysteine 144 are oxidised to a cystine.

Belongs to the Rieske iron-sulfur protein family. Requires [2Fe-2S] cluster as cofactor.

The protein resides in the cell inner membrane. It catalyses the reaction 2 oxidized [plastocyanin] + a plastoquinol + 2 H(+)(in) = 2 reduced [plastocyanin] + a plastoquinone + 4 H(+)(out). In terms of biological role, component of the green S-bacteria bc-complex which consists of the Rieske protein and cytochrome b subunit and which appears to lack a cytochrome c1-equivalent. This complex has a comparatively low redox potential. The chain is Cytochrome b6-f complex iron-sulfur subunit (petC) from Chlorobaculum tepidum (strain ATCC 49652 / DSM 12025 / NBRC 103806 / TLS) (Chlorobium tepidum).